The chain runs to 303 residues: Aspartate carbamoyltransferase catalytic subunit (303 aa).

Carbamoyl phosphate is bound by residues arginine 51 and threonine 52. Lysine 80 is a binding site for L-aspartate. Positions 101, 129, and 132 each coordinate carbamoyl phosphate. L-aspartate is bound by residues arginine 162 and arginine 221. 2 residues coordinate carbamoyl phosphate: leucine 260 and proline 261.

Belongs to the aspartate/ornithine carbamoyltransferase superfamily. ATCase family. Heterooligomer of catalytic and regulatory chains.

The enzyme catalyses carbamoyl phosphate + L-aspartate = N-carbamoyl-L-aspartate + phosphate + H(+). It participates in pyrimidine metabolism; UMP biosynthesis via de novo pathway; (S)-dihydroorotate from bicarbonate: step 2/3. Functionally, catalyzes the condensation of carbamoyl phosphate and aspartate to form carbamoyl aspartate and inorganic phosphate, the committed step in the de novo pyrimidine nucleotide biosynthesis pathway. This is Aspartate carbamoyltransferase catalytic subunit from Saccharolobus islandicus (strain M.16.27) (Sulfolobus islandicus).